Reading from the N-terminus, the 662-residue chain is Probable lysophospholipase 3 (662 aa).

The signal sequence occupies residues 1–19 (MLFNCFGILALLQILPALA). N-linked (GlcNAc...) asparagine glycans are attached at residues asparagine 74, asparagine 127, asparagine 162, asparagine 196, asparagine 266, asparagine 274, asparagine 303, asparagine 376, asparagine 406, asparagine 411, asparagine 483, asparagine 518, asparagine 523, asparagine 547, asparagine 556, asparagine 574, asparagine 596, and asparagine 613. The 542-residue stretch at 76 to 617 (TCPSDYMLRP…EQYCWNGTTV (542 aa)) folds into the PLA2c domain.

The protein belongs to the lysophospholipase family.

It localises to the secreted. The catalysed reaction is a 1-acyl-sn-glycero-3-phosphocholine + H2O = sn-glycerol 3-phosphocholine + a fatty acid + H(+). Functionally, catalyzes the release of fatty acids from lysophospholipids. This chain is Probable lysophospholipase 3 (plb3), found in Schizosaccharomyces pombe (strain 972 / ATCC 24843) (Fission yeast).